The sequence spans 322 residues: uncharacterized protein (322 aa).

Residues 26–267 enclose the Radical SAM core domain; sequence HFGHKVFKVA…CDQLEIIPPE (242 aa). [4Fe-4S] cluster-binding residues include C42, C54, and C57.

It belongs to the radical SAM superfamily. The cofactor is [4Fe-4S] cluster.

This is an uncharacterized protein from Bacillus subtilis (strain 168).